The following is a 143-amino-acid chain: Large ribosomal subunit protein uL11 (143 aa).

It belongs to the universal ribosomal protein uL11 family. Part of the ribosomal stalk of the 50S ribosomal subunit. Interacts with L10 and the large rRNA to form the base of the stalk. L10 forms an elongated spine to which L12 dimers bind in a sequential fashion forming a multimeric L10(L12)X complex. One or more lysine residues are methylated.

Its function is as follows. Forms part of the ribosomal stalk which helps the ribosome interact with GTP-bound translation factors. The sequence is that of Large ribosomal subunit protein uL11 from Leifsonia xyli subsp. xyli (strain CTCB07).